Here is a 224-residue protein sequence, read N- to C-terminus: Cutinase 1 (224 aa).

The N-terminal stretch at 1 to 16 (MKFLSVLSLAITLAAA) is a signal peptide. A disulfide bond links cysteine 46 and cysteine 125. Catalysis depends on serine 136, which acts as the Nucleophile. A disulfide bond links cysteine 187 and cysteine 194. Aspartate 191 is an active-site residue. Histidine 204 functions as the Proton donor/acceptor in the catalytic mechanism.

It belongs to the cutinase family. Post-translationally, the 2 disulfide bonds play a critical role in holding the catalytic residues in juxta-position; reduction of the disulfide bridges results in the complete inactivation of the enzyme. The N-terminus is blocked.

The protein localises to the secreted. The catalysed reaction is cutin + H2O = cutin monomers.. With respect to regulation, inhibited by diisopropyl fluorophosphate (DFP). In terms of biological role, catalyzes the hydrolysis of complex carboxylic polyesters found in the cell wall of plants. Degrades cutin, a macromolecule that forms the structure of the plant cuticle. Allows pathogenic fungi to penetrate through the cuticular barrier into the host plant during the initial stage of fungal infection. This chain is Cutinase 1 (CUTA), found in Colletotrichum gloeosporioides (Anthracnose fungus).